The following is a 216-amino-acid chain: Uracil phosphoribosyltransferase (216 aa).

5-phospho-alpha-D-ribose 1-diphosphate contacts are provided by residues arginine 85, arginine 110, and 135 to 143 (DPMVATGYS). Residues isoleucine 200 and 205–207 (GDA) contribute to the uracil site. Aspartate 206 contacts 5-phospho-alpha-D-ribose 1-diphosphate.

Belongs to the UPRTase family. Requires Mg(2+) as cofactor.

It carries out the reaction UMP + diphosphate = 5-phospho-alpha-D-ribose 1-diphosphate + uracil. The protein operates within pyrimidine metabolism; UMP biosynthesis via salvage pathway; UMP from uracil: step 1/1. With respect to regulation, allosterically activated by GTP. Its function is as follows. Catalyzes the conversion of uracil and 5-phospho-alpha-D-ribose 1-diphosphate (PRPP) to UMP and diphosphate. This chain is Uracil phosphoribosyltransferase, found in Burkholderia lata (strain ATCC 17760 / DSM 23089 / LMG 22485 / NCIMB 9086 / R18194 / 383).